The following is a 136-amino-acid chain: Large ribosomal subunit protein uL16 (136 aa).

The protein belongs to the universal ribosomal protein uL16 family. As to quaternary structure, part of the 50S ribosomal subunit.

Its function is as follows. Binds 23S rRNA and is also seen to make contacts with the A and possibly P site tRNAs. The sequence is that of Large ribosomal subunit protein uL16 from Ehrlichia chaffeensis (strain ATCC CRL-10679 / Arkansas).